Reading from the N-terminus, the 190-residue chain is FMRFamide-related peptides (190 aa).

The signal sequence occupies residues 1 to 21; it reads MSCSRTVALLAALWLVVGATS. The propeptide occupies 22–33; sequence SPVRRSPDLEAR. Residue Phe-45 is modified to Phenylalanine amide. A propeptide spanning residues 69–104 is cleaved from the precursor; sequence GNSFLRFGRSQPLTLSTDDLVSLLRAYEEDYDTPMT. Phe-113 carries the phenylalanine amide modification. Positions 116-150 are excised as a propeptide; that stretch reads DPNFIRLGRSADDDKSAFEQNSELVVSGYPQRKSR. Leu-158 carries the post-translational modification Leucine amide. The propeptide occupies 160 to 190; it reads RDSEEVNENEFEETEESRRKRSADSCHDCQS. The segment at 161–190 is disordered; it reads DSEEVNENEFEETEESRRKRSADSCHDCQS. A compositionally biased stretch (acidic residues) spans 164-174; the sequence is EVNENEFEETE. Residues 175 to 190 are compositionally biased toward basic and acidic residues; that stretch reads ESRRKRSADSCHDCQS.

The protein belongs to the FARP (FMRFamide related peptide) family. RFamide 1: Expressed in corpora cardiaca (CC), corpora allata (CA), antennal lobe (AL) and gnathal ganglion (GNG) (at protein level). Expression in AL detected in most animals, in CC, CA and in GNG in some animals (at protein level). RFamide precursor-related peptide 2: Expressed in corpora cardiaca (CC), corpora allata (CA), antennal lobe (AL) and gnathal ganglion (GNG) (at protein level). Expression in AL detected in some animals, expression in CC, CA and GNG in few animals (at protein level). RFamide 3: Expressed in corpora cardiaca (CC), corpora allata (CA), antennal lobe (AL) and gnathal ganglion (GNG) (at protein level). Expression in AL detected in all animals, in CC, CA and GNG in most animals (at protein level). RFamide 5: Expressed in corpora cardiaca (CC), corpora allata (CA), antennal lobe (AL) and gnathal ganglion (GNG) (at protein level). Expression in AL detected in all animals, in CC, CA and in GNG in some animals (at protein level).

Its subcellular location is the secreted. In insects, FMRFamide and related peptides have modulatory actions at skeletal neuromuscular junctions, and peptides that are immunologically related to FMRFamide are released into the circulation from neurohemal organs. The polypeptide is FMRFamide-related peptides (Agrotis ipsilon (Black cutworm moth)).